The chain runs to 364 residues: UDP-N-acetylglucosamine--N-acetylmuramyl-(pentapeptide) pyrophosphoryl-undecaprenol N-acetylglucosamine transferase 1 (364 aa).

UDP-N-acetyl-alpha-D-glucosamine-binding positions include threonine 10 to glycine 12, asparagine 124, serine 195, isoleucine 250, and glutamine 295.

The protein belongs to the glycosyltransferase 28 family. MurG subfamily.

It localises to the cell membrane. The enzyme catalyses di-trans,octa-cis-undecaprenyl diphospho-N-acetyl-alpha-D-muramoyl-L-alanyl-D-glutamyl-meso-2,6-diaminopimeloyl-D-alanyl-D-alanine + UDP-N-acetyl-alpha-D-glucosamine = di-trans,octa-cis-undecaprenyl diphospho-[N-acetyl-alpha-D-glucosaminyl-(1-&gt;4)]-N-acetyl-alpha-D-muramoyl-L-alanyl-D-glutamyl-meso-2,6-diaminopimeloyl-D-alanyl-D-alanine + UDP + H(+). Its pathway is cell wall biogenesis; peptidoglycan biosynthesis. Functionally, cell wall formation. Catalyzes the transfer of a GlcNAc subunit on undecaprenyl-pyrophosphoryl-MurNAc-pentapeptide (lipid intermediate I) to form undecaprenyl-pyrophosphoryl-MurNAc-(pentapeptide)GlcNAc (lipid intermediate II). The chain is UDP-N-acetylglucosamine--N-acetylmuramyl-(pentapeptide) pyrophosphoryl-undecaprenol N-acetylglucosamine transferase 1 from Bacillus anthracis.